We begin with the raw amino-acid sequence, 176 residues long: Alkyl hydroperoxide reductase AhpD (176 aa).

Cys131 (proton donor) is an active-site residue. Cysteines 131 and 134 form a disulfide. Catalysis depends on Cys134, which acts as the Cysteine sulfenic acid (-SOH) intermediate.

Belongs to the AhpD family.

It catalyses the reaction N(6)-[(R)-dihydrolipoyl]-L-lysyl-[lipoyl-carrier protein] + a hydroperoxide = N(6)-[(R)-lipoyl]-L-lysyl-[lipoyl-carrier protein] + an alcohol + H2O. Antioxidant protein with alkyl hydroperoxidase activity. Required for the reduction of the AhpC active site cysteine residues and for the regeneration of the AhpC enzyme activity. This is Alkyl hydroperoxide reductase AhpD from Methylobacterium sp. (strain 4-46).